Consider the following 313-residue polypeptide: Ornithine carbamoyltransferase (313 aa).

Carbamoyl phosphate contacts are provided by residues 57 to 60 (STRT), Gln84, Arg108, and 135 to 138 (HPTQ). L-ornithine is bound by residues Asn167, Asp231, and 235–236 (SM). Residues 272-273 (CL) and Arg300 contribute to the carbamoyl phosphate site.

Belongs to the aspartate/ornithine carbamoyltransferase superfamily. OTCase family.

The protein localises to the cytoplasm. The catalysed reaction is carbamoyl phosphate + L-ornithine = L-citrulline + phosphate + H(+). It participates in amino-acid biosynthesis; L-arginine biosynthesis; L-arginine from L-ornithine and carbamoyl phosphate: step 1/3. In terms of biological role, reversibly catalyzes the transfer of the carbamoyl group from carbamoyl phosphate (CP) to the N(epsilon) atom of ornithine (ORN) to produce L-citrulline. In Caldanaerobacter subterraneus subsp. tengcongensis (strain DSM 15242 / JCM 11007 / NBRC 100824 / MB4) (Thermoanaerobacter tengcongensis), this protein is Ornithine carbamoyltransferase.